Reading from the N-terminus, the 211-residue chain is Probable GTP-binding protein EngB (211 aa).

Residues 30 to 204 (EGFEVAFAGR…YTVLAGWMEL (175 aa)) form the EngB-type G domain. GTP is bound by residues 38–45 (GRSNAGKS), 64–68 (GRTQL), 82–85 (DLPG), 149–152 (TKAD), and 182–185 (LFSA). Mg(2+)-binding residues include serine 45 and threonine 66.

Belongs to the TRAFAC class TrmE-Era-EngA-EngB-Septin-like GTPase superfamily. EngB GTPase family. It depends on Mg(2+) as a cofactor.

In terms of biological role, necessary for normal cell division and for the maintenance of normal septation. This is Probable GTP-binding protein EngB from Pseudomonas syringae pv. tomato (strain ATCC BAA-871 / DC3000).